The chain runs to 441 residues: uncharacterized protein (441 aa).

11 helical membrane-spanning segments follow: residues Met-68–Ala-88, Ala-110–Val-130, Gly-131–Pro-151, Ser-164–Pro-184, Gly-194–Leu-214, Ala-229–Ala-246, Ser-260–Val-280, Ala-287–Leu-307, Val-337–Ala-357, Val-384–Ile-404, and Val-412–Gly-432.

This sequence belongs to the major facilitator superfamily.

It is found in the cell membrane. This is an uncharacterized protein from Mycobacterium tuberculosis (strain ATCC 25618 / H37Rv).